The primary structure comprises 376 residues: MYNLRMAESVTEGHPDKIADQLADALLDEFIKKDPYSKVSLEIMVTTGLVMVGGELTTESYVDIPRVVRSVIKDIGYTRPELGFDADTCAVVQSIDEQSPEIALGISSEGAGDTAIVVGYATKEAPNLMPWPITIAHKITKRISEYRKIGKFPFLRPDGKVLVAMIYEDGKPSYVQSIVAYVHHDPDVSINHLRELIIEEIIKKEIPEEFLTEKTSIKVNPTGRFVIGGPVADTGLTGRKIVSDAYGDIGLSGGSAFSGKDPTKTDRSGSYLARMIAKHVVAGGWAERCLVQIGYAFGLTEPVAFDIETFGTEKISKEILEDAVKKVFPLRPAEIIEFLDLRKPIYRQTSVYGHFGKENLPWEKLTKLEELKELLD.

Residue His-14 participates in ATP binding. Mg(2+) is bound at residue Asp-16. Residue Glu-42 coordinates K(+). L-methionine contacts are provided by Glu-55 and Gln-98. The segment at 98–108 is flexible loop; it reads QSPEIALGISS. ATP-binding positions include 158–160, 224–225, Asp-233, 239–240, Ala-256, and Lys-260; these read DGK, RF, and RK. Residue Asp-233 coordinates L-methionine. Lys-264 lines the L-methionine pocket.

It belongs to the AdoMet synthase family. In terms of assembly, homotetramer; dimer of dimers. It depends on Mg(2+) as a cofactor. Requires K(+) as cofactor.

It is found in the cytoplasm. It catalyses the reaction L-methionine + ATP + H2O = S-adenosyl-L-methionine + phosphate + diphosphate. The protein operates within amino-acid biosynthesis; S-adenosyl-L-methionine biosynthesis; S-adenosyl-L-methionine from L-methionine: step 1/1. In terms of biological role, catalyzes the formation of S-adenosylmethionine (AdoMet) from methionine and ATP. The overall synthetic reaction is composed of two sequential steps, AdoMet formation and the subsequent tripolyphosphate hydrolysis which occurs prior to release of AdoMet from the enzyme. This chain is S-adenosylmethionine synthase, found in Aquifex aeolicus (strain VF5).